The sequence spans 206 residues: MARYLGPKLKLSRREGTDLFLKSGVRAIDSKCKIDTAPGQHGARRGRLSDYGVQLREKQKVRRMYGVLEKQFRNYYKEAARLKGNTGENLLQLLEQRLDNVVYRMGFASTRAEARQLVSHKAIMVNGQVVNIPSFNVSAEDVVSVREKAKKQARIVAALELADQREKPTWIEVDSSKMEGTFKRVPERTDLSAEINEQLIVELYSK.

The S4 RNA-binding domain maps to 96-156 (QRLDNVVYRM…EKAKKQARIV (61 aa)).

It belongs to the universal ribosomal protein uS4 family. In terms of assembly, part of the 30S ribosomal subunit. Contacts protein S5. The interaction surface between S4 and S5 is involved in control of translational fidelity.

Its function is as follows. One of the primary rRNA binding proteins, it binds directly to 16S rRNA where it nucleates assembly of the body of the 30S subunit. With S5 and S12 plays an important role in translational accuracy. This chain is Small ribosomal subunit protein uS4, found in Alteromonas mediterranea (strain DSM 17117 / CIP 110805 / LMG 28347 / Deep ecotype).